We begin with the raw amino-acid sequence, 137 residues long: Ubiquitin-conjugating enzyme variant MMS2 (137 aa).

Residues 5–137 (PRNFRLLEEL…LRQPKEGETF (133 aa)) form the UBC core domain. Residue Ser-71 is modified to Phosphoserine.

This sequence belongs to the ubiquitin-conjugating enzyme family. In terms of assembly, heterodimer with UBC13.

In terms of biological role, has a role in the DNA error-free postreplication repair (PRR) pathway. Lacks catalytic activity by itself. The UBC13/MMS2 heterodimer catalyzes the synthesis of non-canonical poly-ubiquitin chains that are linked through 'Lys-63'. The chain is Ubiquitin-conjugating enzyme variant MMS2 (MMS2) from Saccharomyces cerevisiae (strain ATCC 204508 / S288c) (Baker's yeast).